The primary structure comprises 447 residues: Serine/threonine-protein phosphatase 2A 55 kDa regulatory subunit B gamma isoform (447 aa).

WD repeat units follow at residues 22 to 61 (TEAD…KNAP), 87 to 128 (EIEE…KRPE), 171 to 209 (GHTY…RSFN), 220 to 260 (DLTE…LCDK), 279 to 317 (EIIS…RPIE), 334 to 375 (ENDC…DVTL), and 410 to 446 (DFTK…NSDV).

The protein belongs to the phosphatase 2A regulatory subunit B family. PP2A consists of a common heterodimeric core enzyme, composed of a 36 kDa catalytic subunit (subunit C) and a 65 kDa constant regulatory subunit (PR65 or subunit A), that associates with a variety of regulatory subunits. Proteins that associate with the core dimer include three families of regulatory subunits B (the R2/B/PR55/B55, R3/B''/PR72/PR130/PR59 and R5/B'/B56 families), the 48 kDa variable regulatory subunit, viral proteins, and cell signaling molecules. Interacts with IER5. As to expression, highly expressed in brain.

The B regulatory subunit might modulate substrate selectivity and catalytic activity, and might also direct the localization of the catalytic enzyme to a particular subcellular compartment. The sequence is that of Serine/threonine-protein phosphatase 2A 55 kDa regulatory subunit B gamma isoform (PPP2R2C) from Oryctolagus cuniculus (Rabbit).